Consider the following 82-residue polypeptide: Omega-conotoxin-like 9 (82 aa).

The first 22 residues, Met1 to Ala22, serve as a signal peptide directing secretion. The propeptide occupies Asp23–Arg51. Disulfide bonds link Cys54–Cys69, Cys61–Cys73, and Cys68–Cys77.

This sequence belongs to the conotoxin O1 superfamily. Expressed by the venom duct.

It is found in the secreted. Functionally, omega-conotoxins act at presynaptic membranes, they bind and block voltage-gated calcium channels (Cav). The chain is Omega-conotoxin-like 9 from Conus striatus (Striated cone).